The following is a 570-amino-acid chain: Interleukin-1 receptor accessory protein (570 aa).

The N-terminal stretch at 1–20 (MTLLWCVVSLYFYGILQSDA) is a signal peptide. 3 Ig-like C2-type domains span residues 21-128 (SERC…VAFP), 136-226 (SCFN…FHLT), and 242-350 (PPVI…VKQK). Over 21-367 (SERCDDWGLD…VELACGFGAT (347 aa)) the chain is Extracellular. 5 cysteine pairs are disulfide-bonded: C24/C122, C47/C114, C137/C181, C160/C212, and C266/C332. N-linked (GlcNAc...) asparagine glycosylation is present at N57. Residues 69–85 (IWYWTRQDRDLEEPINF) are essential for interaction with PTPRD. N-linked (GlcNAc...) asparagine glycosylation is found at N107, N111, and N118. N196, N209, and N299 each carry an N-linked (GlcNAc...) asparagine glycan. A helical membrane pass occupies residues 368-388 (VLLVVILIVVYHVYWLEMVLF). Over 389–570 (YRAHFGTDET…GLSYSSLKNV (182 aa)) the chain is Cytoplasmic. One can recognise a TIR domain in the interval 403-546 (KEYDIYVSYA…RFWKQLQVAM (144 aa)). Residue E482 is part of the active site. The disordered stretch occupies residues 549-570 (KKSPRRSSSDEQGLSYSSLKNV). S557 carries the post-translational modification Phosphoserine. Polar residues predominate over residues 558–570 (DEQGLSYSSLKNV).

This sequence belongs to the interleukin-1 receptor family. The interleukin-36 receptor complex is a heterodimer of IL1RL2 and IL1RAP; the association is inhibited by IL36RN. The interleukin-1 receptor complex is a heterodimer of IL1R1 and IL1RAP. Associates with IL1R2 to form a non-signaling interleukin-1 receptor complex. Interacts with IL-33-bound IL1RL1 to form the minimal interleukin-33 signaling complex with a 1:1:1 stoichiometry. Interacts with KIT (independently of stimulation with KITLG/SCF). A mast cell-specific KITLG/SCF-induced interleukin-33 signaling complex contains IL1RL1, IL1RAP, KIT and MYD88. Interacts (via the first immunoglobilin domain) with PTPRD (via the third immunoglobilin domain); induces pre- and postsynaptic differentiation of neurons.

It localises to the cell membrane. It is found in the secreted. It catalyses the reaction NAD(+) + H2O = ADP-D-ribose + nicotinamide + H(+). Functionally, coreceptor for IL1RL2 in the IL-36 signaling system. Coreceptor with IL1R1 in the IL-1 signaling system. Associates with IL1R1 bound to IL1B to form the high affinity interleukin-1 receptor complex which mediates interleukin-1-dependent activation of NF-kappa-B and other pathways. Signaling involves the recruitment of adapter molecules such as TOLLIP, MYD88, and IRAK1 or IRAK2 via the respective TIR domains of the receptor/coreceptor subunits. Recruits TOLLIP to the signaling complex. Does not bind to interleukin-1 alone; binding of IL1RN to IL1R1, prevents its association with IL1R1 to form a signaling complex. The cellular response is modulated through a non-signaling association with the membrane IL1R2 decoy receptor. Coreceptor for IL1RL1 in the IL-33 signaling system. Can bidirectionally induce pre- and postsynaptic differentiation of neurons by trans-synaptically binding to PTPRD. May play a role in IL1B-mediated costimulation of IFNG production from T-helper 1 (Th1) cells. In terms of biological role, associates with secreted ligand-bound IL1R2 and increases the affinity of secreted IL1R2 for IL1B; this complex formation may be the dominant mechanism for neutralization of IL1B by secreted/soluble receptors. Enhances the ability of secreted IL1R1 to inhibit IL-33 signaling. This chain is Interleukin-1 receptor accessory protein (IL1RAP), found in Macaca mulatta (Rhesus macaque).